Reading from the N-terminus, the 237-residue chain is Chalcone--flavanone isomerase 1 (237 aa).

Substrate is bound by residues Thr-48, Asn-113, and Ser-190.

It belongs to the chalcone isomerase family.

The catalysed reaction is a chalcone = a flavanone.. Its pathway is secondary metabolite biosynthesis; flavonoid biosynthesis. Functionally, catalyzes the intramolecular cyclization of bicyclic chalcones into tricyclic (S)-flavanones. Responsible for the isomerization of 4,2',4',6'-tetrahydroxychalcone (also termed chalcone) into naringenin. In Fragaria ananassa (Strawberry), this protein is Chalcone--flavanone isomerase 1 (CHI1).